The primary structure comprises 185 residues: Large ribosomal subunit protein uL15 (185 aa).

The disordered stretch occupies residues 1–51 (MDLSSLRPAAGAVKNKKRVGRGQGSGNGTTAGKGNKGQQARSGYQKPINEG). Residues 21–35 (RGQGSGNGTTAGKGN) show a composition bias toward gly residues.

Belongs to the universal ribosomal protein uL15 family. Part of the 50S ribosomal subunit.

Its function is as follows. Binds to the 23S rRNA. The polypeptide is Large ribosomal subunit protein uL15 (Chlorobium phaeobacteroides (strain DSM 266 / SMG 266 / 2430)).